The following is a 208-amino-acid chain: Methylthioribulose-1-phosphate dehydratase (208 aa).

Positions 101 and 103 each coordinate Zn(2+).

This sequence belongs to the aldolase class II family. MtnB subfamily. Zn(2+) serves as cofactor.

The enzyme catalyses 5-(methylsulfanyl)-D-ribulose 1-phosphate = 5-methylsulfanyl-2,3-dioxopentyl phosphate + H2O. It participates in amino-acid biosynthesis; L-methionine biosynthesis via salvage pathway; L-methionine from S-methyl-5-thio-alpha-D-ribose 1-phosphate: step 2/6. Catalyzes the dehydration of methylthioribulose-1-phosphate (MTRu-1-P) into 2,3-diketo-5-methylthiopentyl-1-phosphate (DK-MTP-1-P). This is Methylthioribulose-1-phosphate dehydratase from Gluconobacter oxydans (strain 621H) (Gluconobacter suboxydans).